A 389-amino-acid polypeptide reads, in one-letter code: UDP-N-acetylglucosamine--N-acetylmuramyl-(pentapeptide) pyrophosphoryl-undecaprenol N-acetylglucosamine transferase (389 aa).

UDP-N-acetyl-alpha-D-glucosamine-binding positions include 17-19 (TAG), Asn137, Arg179, Ser213, and Gln308.

The protein belongs to the glycosyltransferase 28 family. MurG subfamily.

Its subcellular location is the cell membrane. It catalyses the reaction di-trans,octa-cis-undecaprenyl diphospho-N-acetyl-alpha-D-muramoyl-L-alanyl-D-glutamyl-meso-2,6-diaminopimeloyl-D-alanyl-D-alanine + UDP-N-acetyl-alpha-D-glucosamine = di-trans,octa-cis-undecaprenyl diphospho-[N-acetyl-alpha-D-glucosaminyl-(1-&gt;4)]-N-acetyl-alpha-D-muramoyl-L-alanyl-D-glutamyl-meso-2,6-diaminopimeloyl-D-alanyl-D-alanine + UDP + H(+). Its pathway is cell wall biogenesis; peptidoglycan biosynthesis. Functionally, cell wall formation. Catalyzes the transfer of a GlcNAc subunit on undecaprenyl-pyrophosphoryl-MurNAc-pentapeptide (lipid intermediate I) to form undecaprenyl-pyrophosphoryl-MurNAc-(pentapeptide)GlcNAc (lipid intermediate II). The protein is UDP-N-acetylglucosamine--N-acetylmuramyl-(pentapeptide) pyrophosphoryl-undecaprenol N-acetylglucosamine transferase of Rhodococcus erythropolis (strain PR4 / NBRC 100887).